Consider the following 378-residue polypeptide: Dual-specificity RNA methyltransferase RlmN (378 aa).

Glu-95 functions as the Proton acceptor in the catalytic mechanism. The Radical SAM core domain maps to 101–345; that stretch reads EETRGTLCVS…TTIRKTRGDD (245 aa). Residues Cys-108 and Cys-350 are joined by a disulfide bond. The [4Fe-4S] cluster site is built by Cys-115, Cys-119, and Cys-122. S-adenosyl-L-methionine-binding positions include 176–177, Ser-208, 230–232, and Asn-307; these read GE and SLH. The active-site S-methylcysteine intermediate is the Cys-350.

The protein belongs to the radical SAM superfamily. RlmN family. [4Fe-4S] cluster is required as a cofactor.

It localises to the cytoplasm. The enzyme catalyses adenosine(2503) in 23S rRNA + 2 reduced [2Fe-2S]-[ferredoxin] + 2 S-adenosyl-L-methionine = 2-methyladenosine(2503) in 23S rRNA + 5'-deoxyadenosine + L-methionine + 2 oxidized [2Fe-2S]-[ferredoxin] + S-adenosyl-L-homocysteine. It carries out the reaction adenosine(37) in tRNA + 2 reduced [2Fe-2S]-[ferredoxin] + 2 S-adenosyl-L-methionine = 2-methyladenosine(37) in tRNA + 5'-deoxyadenosine + L-methionine + 2 oxidized [2Fe-2S]-[ferredoxin] + S-adenosyl-L-homocysteine. Specifically methylates position 2 of adenine 2503 in 23S rRNA and position 2 of adenine 37 in tRNAs. m2A2503 modification seems to play a crucial role in the proofreading step occurring at the peptidyl transferase center and thus would serve to optimize ribosomal fidelity. This chain is Dual-specificity RNA methyltransferase RlmN, found in Burkholderia pseudomallei (strain K96243).